A 95-amino-acid chain; its full sequence is Integration host factor subunit beta (95 aa).

The protein belongs to the bacterial histone-like protein family. In terms of assembly, heterodimer of an alpha and a beta chain.

In terms of biological role, this protein is one of the two subunits of integration host factor, a specific DNA-binding protein that functions in genetic recombination as well as in transcriptional and translational control. This chain is Integration host factor subunit beta, found in Erwinia tasmaniensis (strain DSM 17950 / CFBP 7177 / CIP 109463 / NCPPB 4357 / Et1/99).